Reading from the N-terminus, the 366-residue chain is Leucine dehydrogenase (366 aa).

Lysine 82 is an active-site residue. 182–188 (GVGNVAY) contributes to the NAD(+) binding site.

Belongs to the Glu/Leu/Phe/Val dehydrogenases family.

It carries out the reaction L-leucine + NAD(+) + H2O = 4-methyl-2-oxopentanoate + NH4(+) + NADH + H(+). The protein operates within amino-acid degradation; L-leucine degradation; 4-methyl-2-oxopentanoate from L-leucine (dehydrogenase route): step 1/1. Catalyzes the reversible deamination of L-leucine to 4-methyl-2-oxopentanoate. This chain is Leucine dehydrogenase (ldh), found in Bacillus cereus.